A 632-amino-acid polypeptide reads, in one-letter code: Chaperone protein HtpG (632 aa).

Positions 1-339 (MAHETMSFQA…SADLPLNVSR (339 aa)) are a; substrate-binding. The segment at 340 to 559 (EILQESRDVK…DNDMSGYLQR (220 aa)) is b. Residues 560 to 632 (MLKAAGQNAP…TNALLLSRAA (73 aa)) are c.

It belongs to the heat shock protein 90 family. As to quaternary structure, homodimer.

Its subcellular location is the cytoplasm. Its function is as follows. Molecular chaperone. Has ATPase activity. This is Chaperone protein HtpG from Burkholderia ambifaria (strain ATCC BAA-244 / DSM 16087 / CCUG 44356 / LMG 19182 / AMMD) (Burkholderia cepacia (strain AMMD)).